A 551-amino-acid polypeptide reads, in one-letter code: Glucans biosynthesis protein D (551 aa).

A signal peptide (tat-type signal) is located at residues 1-32; sequence MNRRRFIKGSMAMAAVCGSSGIASLFSQAAFA.

It belongs to the OpgD/OpgG family. In terms of processing, predicted to be exported by the Tat system. The position of the signal peptide cleavage has not been experimentally proven.

The protein resides in the periplasm. It functions in the pathway glycan metabolism; osmoregulated periplasmic glucan (OPG) biosynthesis. Functionally, probably involved in the control of the structural glucose backbone of osmoregulated periplasmic glucans (OPGs). This Salmonella paratyphi A (strain ATCC 9150 / SARB42) protein is Glucans biosynthesis protein D.